The chain runs to 274 residues: MQQLQNVIETAFERRADITPANVDTVTREAITHVIDLLDTGALRVAEKIDGQWVTHQWLKKAVLLSFRINDNQVMEGAETRYYDKVPMKFAGYDEARFQREGFRVVPPATVRKGAFIARNTVLMPSYVNIGAFVDEGTMVDTWATVGSCAQIGKNVHLSGGVGIGGVLEPLQANPTIIEDNCFVGARSEVVEGVIVEEGSVISMGVFIGQSTRIYDRETGEVHYGRVPAGSVVVSGNLPSKDGSYSLYCAVIVKKVDAKTRSKVGINELLRTID.

2 residues coordinate substrate: R104 and D141.

This sequence belongs to the transferase hexapeptide repeat family. Homotrimer.

Its subcellular location is the cytoplasm. The catalysed reaction is (S)-2,3,4,5-tetrahydrodipicolinate + succinyl-CoA + H2O = (S)-2-succinylamino-6-oxoheptanedioate + CoA. The protein operates within amino-acid biosynthesis; L-lysine biosynthesis via DAP pathway; LL-2,6-diaminopimelate from (S)-tetrahydrodipicolinate (succinylase route): step 1/3. This Yersinia pestis protein is 2,3,4,5-tetrahydropyridine-2,6-dicarboxylate N-succinyltransferase.